The primary structure comprises 408 residues: MAFLSLHTSPMEQPGAGDAGGMNVYVRALAMALAESGVEVEIFTRSTKAGQPAVEHPGPGVCVHNVMAGPRRKLPKEELPELLHHMVEEIDRIRLQQLHGRYDAIHSHYWVSGVAGLELSELWGVPLVHTMHTMAKVKNLVLESGERPEPRRREEGEQRIVDGAARLVANTPAEADELVSHYGADLDRIDVAPPGVDLKVFTPSFRRKSRSLRGVRPDSFHILFAGRIQRLKGPQVFVKAAGILRKRRPDIDLEMTILGSLSGAKDFNLQHFIEDAGLADVVTHRPPVVAPELASWFRSADVVVMPSFSESFGLVALEAQACGTPVVATNVGGLSRAISDGRTGILVDGHHPSDWADALEDLYDDVQTREDMGRLAATHAESFGWQRTAAITLESYREAVSGLLVPRR.

A 1D-myo-inositol 3-phosphate-binding site is contributed by His7. Residues 13 to 14 (QP) and Gly21 each bind UDP-N-acetyl-alpha-D-glucosamine. 1D-myo-inositol 3-phosphate contacts are provided by residues 18–23 (DAGGMN), Lys76, Tyr109, Thr133, and Arg153. 3 residues coordinate UDP-N-acetyl-alpha-D-glucosamine: Arg227, Lys232, and Val288. 3 residues coordinate Mg(2+): Phe297, Arg298, and Ala300. UDP-N-acetyl-alpha-D-glucosamine is bound by residues Glu310 and Glu318. Thr324 lines the Mg(2+) pocket.

It belongs to the glycosyltransferase group 1 family. MshA subfamily. In terms of assembly, homodimer.

It carries out the reaction 1D-myo-inositol 3-phosphate + UDP-N-acetyl-alpha-D-glucosamine = 1D-myo-inositol 2-acetamido-2-deoxy-alpha-D-glucopyranoside 3-phosphate + UDP + H(+). Functionally, catalyzes the transfer of a N-acetyl-glucosamine moiety to 1D-myo-inositol 3-phosphate to produce 1D-myo-inositol 2-acetamido-2-deoxy-glucopyranoside 3-phosphate in the mycothiol biosynthesis pathway. The protein is D-inositol 3-phosphate glycosyltransferase of Paenarthrobacter aurescens (strain TC1).